The sequence spans 717 residues: Ubiquitin carboxyl-terminal hydrolase 11 (717 aa).

The segment at alanine 231 to lysine 268 is disordered. Low complexity predominate over residues serine 242–serine 257. A compositionally biased stretch (basic and acidic residues) spans lysine 258–lysine 268. One can recognise a USP domain in the interval threonine 298–methionine 707. Cysteine 307 functions as the Nucleophile in the catalytic mechanism. Residues lysine 531–asparagine 577 are disordered. Residues serine 549–histidine 564 show a composition bias toward basic residues. Histidine 649 acts as the Proton acceptor in catalysis.

The protein belongs to the peptidase C19 family.

The catalysed reaction is Thiol-dependent hydrolysis of ester, thioester, amide, peptide and isopeptide bonds formed by the C-terminal Gly of ubiquitin (a 76-residue protein attached to proteins as an intracellular targeting signal).. The chain is Ubiquitin carboxyl-terminal hydrolase 11 (UBP11) from Saccharomyces cerevisiae (strain ATCC 204508 / S288c) (Baker's yeast).